Consider the following 360-residue polypeptide: Photosystem II protein D1 3 (360 aa).

The next 3 helical transmembrane spans lie at 29 to 46, 118 to 133, and 142 to 156; these read YVGW…TATI, HFLL…EWEL, and WIAV…AATA. A chlorophyll a-binding site is contributed by histidine 118. Tyrosine 126 contributes to the pheophytin a binding site. Aspartate 170 and glutamate 189 together coordinate [CaMn4O5] cluster. The chain crosses the membrane as a helical span at residues 197–218; the sequence is FHMLGVAGVFGGALFSAMHGSL. Position 198 (histidine 198) interacts with chlorophyll a. Residues histidine 215 and 264–265 contribute to the a quinone site; that span reads SF. Fe cation is bound at residue histidine 215. Histidine 272 contacts Fe cation. The chain crosses the membrane as a helical span at residues 274–288; it reads FLAAWPVIGIWFASL. Histidine 332, glutamate 333, aspartate 342, and alanine 344 together coordinate [CaMn4O5] cluster. A propeptide spanning residues 345–360 is cleaved from the precursor; sequence AGDQAPVALQAPAING.

The protein belongs to the reaction center PufL/M/PsbA/D family. As to quaternary structure, PSII is composed of 1 copy each of membrane proteins PsbA, PsbB, PsbC, PsbD, PsbE, PsbF, PsbH, PsbI, PsbJ, PsbK, PsbL, PsbM, PsbT, PsbX, PsbY, PsbZ, Psb30/Ycf12, peripheral proteins PsbO, CyanoQ (PsbQ), PsbU, PsbV and a large number of cofactors. It forms dimeric complexes. The D1/D2 heterodimer binds P680, chlorophylls that are the primary electron donor of PSII, and subsequent electron acceptors. It shares a non-heme iron and each subunit binds pheophytin, quinone, additional chlorophylls, carotenoids and lipids. D1 provides most of the ligands for the Mn4-Ca-O5 cluster of the oxygen-evolving complex (OEC). There is also a Cl(-1) ion associated with D1 and D2, which is required for oxygen evolution. The PSII complex binds additional chlorophylls, carotenoids and specific lipids. serves as cofactor. In terms of processing, tyr-161 forms a radical intermediate that is referred to as redox-active TyrZ, YZ or Y-Z. Post-translationally, C-terminally processed by CtpA; processing is essential to allow assembly of the oxygen-evolving complex and thus photosynthetic growth.

The protein localises to the cellular thylakoid membrane. It catalyses the reaction 2 a plastoquinone + 4 hnu + 2 H2O = 2 a plastoquinol + O2. Its function is as follows. Photosystem II (PSII) is a light-driven water:plastoquinone oxidoreductase that uses light energy to abstract electrons from H(2)O, generating O(2) and a proton gradient subsequently used for ATP formation. It consists of a core antenna complex that captures photons, and an electron transfer chain that converts photonic excitation into a charge separation. The D1/D2 (PsbA/PsbD) reaction center heterodimer binds P680, the primary electron donor of PSII as well as several subsequent electron acceptors. This chain is Photosystem II protein D1 3, found in Picosynechococcus sp. (strain ATCC 27264 / PCC 7002 / PR-6) (Agmenellum quadruplicatum).